The following is a 92-amino-acid chain: DNA-directed RNA polymerase subunit Rpo11 (92 aa).

The protein belongs to the archaeal Rpo11/eukaryotic RPB11/RPC19 RNA polymerase subunit family. In terms of assembly, part of the RNA polymerase complex.

It localises to the cytoplasm. The catalysed reaction is RNA(n) + a ribonucleoside 5'-triphosphate = RNA(n+1) + diphosphate. In terms of biological role, DNA-dependent RNA polymerase (RNAP) catalyzes the transcription of DNA into RNA using the four ribonucleoside triphosphates as substrates. This chain is DNA-directed RNA polymerase subunit Rpo11, found in Methanosarcina acetivorans (strain ATCC 35395 / DSM 2834 / JCM 12185 / C2A).